The sequence spans 119 residues: Large ribosomal subunit protein bL20 (119 aa).

Belongs to the bacterial ribosomal protein bL20 family.

In terms of biological role, binds directly to 23S ribosomal RNA and is necessary for the in vitro assembly process of the 50S ribosomal subunit. It is not involved in the protein synthesizing functions of that subunit. This chain is Large ribosomal subunit protein bL20, found in Azorhizobium caulinodans (strain ATCC 43989 / DSM 5975 / JCM 20966 / LMG 6465 / NBRC 14845 / NCIMB 13405 / ORS 571).